Consider the following 130-residue polypeptide: MKGLLARMHQQWQNLFPSAPSKGQHFEQLAERWLQARGLQPVTRNYRCRGGEIDLIMRQGETLVFVEVRYRSQTSHGGAAASVTRCKQHKIVLAARHYFKQHAINEASQACRFDVIAFEGDQPDWIQNAF.

Belongs to the UPF0102 family.

This is UPF0102 protein AHA_3896 from Aeromonas hydrophila subsp. hydrophila (strain ATCC 7966 / DSM 30187 / BCRC 13018 / CCUG 14551 / JCM 1027 / KCTC 2358 / NCIMB 9240 / NCTC 8049).